Reading from the N-terminus, the 353-residue chain is Ferredoxin--NADP reductase 1 (353 aa).

The FAD site is built by Thr-14, Asp-33, Gln-41, Tyr-46, Ala-86, Phe-121, Asp-289, and Thr-330.

This sequence belongs to the ferredoxin--NADP reductase type 2 family. Homodimer. FAD is required as a cofactor.

The catalysed reaction is 2 reduced [2Fe-2S]-[ferredoxin] + NADP(+) + H(+) = 2 oxidized [2Fe-2S]-[ferredoxin] + NADPH. This chain is Ferredoxin--NADP reductase 1, found in Christiangramia forsetii (strain DSM 17595 / CGMCC 1.15422 / KT0803) (Gramella forsetii).